The chain runs to 298 residues: Tryptophan 2,3-dioxygenase (298 aa).

Substrate contacts are provided by residues 51–55 (FIIQH), Tyr-113, and Arg-117. His-240 contacts heme. Thr-254 lines the substrate pocket.

This sequence belongs to the tryptophan 2,3-dioxygenase family. As to quaternary structure, homotetramer. The cofactor is heme.

The enzyme catalyses L-tryptophan + O2 = N-formyl-L-kynurenine. The protein operates within amino-acid degradation; L-tryptophan degradation via kynurenine pathway; L-kynurenine from L-tryptophan: step 1/2. Functionally, heme-dependent dioxygenase that catalyzes the oxidative cleavage of the L-tryptophan (L-Trp) pyrrole ring and converts L-tryptophan to N-formyl-L-kynurenine. Catalyzes the oxidative cleavage of the indole moiety. The protein is Tryptophan 2,3-dioxygenase of Xanthomonas campestris pv. campestris (strain 8004).